The chain runs to 312 residues: Acetyl-coenzyme A carboxylase carboxyl transferase subunit alpha (312 aa).

In terms of domain architecture, CoA carboxyltransferase C-terminal spans 36 to 286; sequence NLEKEISKTY…ADYVKKSLNE (251 aa).

This sequence belongs to the AccA family. In terms of assembly, acetyl-CoA carboxylase is a heterohexamer composed of biotin carboxyl carrier protein (AccB), biotin carboxylase (AccC) and two subunits each of ACCase subunit alpha (AccA) and ACCase subunit beta (AccD).

The protein resides in the cytoplasm. It carries out the reaction N(6)-carboxybiotinyl-L-lysyl-[protein] + acetyl-CoA = N(6)-biotinyl-L-lysyl-[protein] + malonyl-CoA. It functions in the pathway lipid metabolism; malonyl-CoA biosynthesis; malonyl-CoA from acetyl-CoA: step 1/1. Functionally, component of the acetyl coenzyme A carboxylase (ACC) complex. First, biotin carboxylase catalyzes the carboxylation of biotin on its carrier protein (BCCP) and then the CO(2) group is transferred by the carboxyltransferase to acetyl-CoA to form malonyl-CoA. This chain is Acetyl-coenzyme A carboxylase carboxyl transferase subunit alpha, found in Campylobacter jejuni (strain RM1221).